The sequence spans 167 residues: MIIYKDIFSNDELLSDAYDAKLVDDVIYEADCAMVNVGGDNIDIGANPSAEGGDDDVEEGAEMVNNVVHSFRLQQTAFDKKSFLTYIKGYMKAVKAKLQETNPEEVPKFEKGAQTYVKKVIGSFKDWEFFTGESMDPDAMVVMLNYREDGTTPFVAIWKHGIVEEKI.

A TCTP domain is found at 1 to 167 (MIIYKDIFSN…WKHGIVEEKI (167 aa)). Phosphoserine occurs at positions 9 and 15.

The protein belongs to the TCTP family. In terms of assembly, interacts with the 40S and 60S ribosomal subunits. Interacts with microtubules.

It is found in the cytoplasm. The protein localises to the cytoskeleton. The protein resides in the mitochondrion. Its function is as follows. Involved in protein synthesis. Involved in microtubule stabilization. The sequence is that of Translationally-controlled tumor protein homolog (TMA19) from Saccharomyces cerevisiae (strain ATCC 204508 / S288c) (Baker's yeast).